A 142-amino-acid polypeptide reads, in one-letter code: Glia maturation factor beta (142 aa).

At S2 the chain carries N-acetylserine. Residues 4 to 139 form the ADF-H domain; sequence SLVVCDVAED…TEEWLREKLG (136 aa).

Belongs to the actin-binding proteins ADF family. GMF subfamily. In terms of processing, phosphorylated; stimulated by phorbol ester.

Its function is as follows. This protein causes differentiation of brain cells, stimulation of neural regeneration, and inhibition of proliferation of tumor cells. The chain is Glia maturation factor beta (Gmfb) from Rattus norvegicus (Rat).